Reading from the N-terminus, the 738-residue chain is Wall-associated receptor kinase 4 (738 aa).

An N-terminal signal peptide occupies residues Met-1 to Gly-22. Over Gln-23–Trp-335 the chain is Extracellular. 7 N-linked (GlcNAc...) asparagine glycosylation sites follow: Asn-34, Asn-56, Asn-109, Asn-115, Asn-132, Asn-182, and Asn-208. The region spanning Arg-232 to Gln-278 is the EGF-like 1 domain. 6 disulfides stabilise this stretch: Cys-236-Cys-250, Cys-244-Cys-261, Cys-263-Cys-277, Cys-283-Cys-300, Cys-294-Cys-309, and Cys-311-Cys-324. The EGF-like 2; calcium-binding domain occupies Asp-279 to Lys-325. A glycan (N-linked (GlcNAc...) asparagine) is linked at Asn-293. Asn-318 carries an N-linked (GlcNAc...) asparagine glycan. The chain crosses the membrane as a helical span at residues Thr-336–Ile-356. Over Glu-357 to Arg-738 the chain is Cytoplasmic. The residue at position 399 (Thr-399) is a Phosphothreonine. Residues Tyr-410–Ser-693 enclose the Protein kinase domain. ATP contacts are provided by residues Leu-416–Val-424 and Lys-438. Tyr-483 bears the Phosphotyrosine mark. Asp-535 acts as the Proton acceptor in catalysis. Phosphothreonine is present on residues Thr-569 and Thr-574. Tyr-582 is subject to Phosphotyrosine.

The protein belongs to the protein kinase superfamily. Ser/Thr protein kinase family. Strictly expressed in siliques.

It localises to the membrane. The enzyme catalyses L-seryl-[protein] + ATP = O-phospho-L-seryl-[protein] + ADP + H(+). The catalysed reaction is L-threonyl-[protein] + ATP = O-phospho-L-threonyl-[protein] + ADP + H(+). In terms of biological role, serine/threonine-protein kinase that may function as a signaling receptor of extracellular matrix component. Binding to pectin may have significance in the control of cell expansion, morphogenesis and development. The chain is Wall-associated receptor kinase 4 (WAK4) from Arabidopsis thaliana (Mouse-ear cress).